The following is a 251-amino-acid chain: MNLNSIPAFDDNYIWVLNDEAGRCLIVDPGDAEPVLNAISANNWQPEAIFLTHHHHDHVGGVKELVEKFPQIVVYGPQETQDKGTTQVVKDGETAFVLGHEFSVIATPGHTLGHICYFSKPYLFCGDTLFSGGCGRLFEGTPSQMYQSLKKLSALPDDTLVCCAHEYTLSNMKFALSILPHDLSINDYYRKVKELRAKNQITLPVILKNERQINVFLRTENIDLINVINEETLLQQPEERFAWLRSKKDRF.

Residues histidine 53, histidine 55, aspartate 57, histidine 58, histidine 110, aspartate 127, and histidine 165 each contribute to the Zn(2+) site.

This sequence belongs to the metallo-beta-lactamase superfamily. Glyoxalase II family. Monomer. Zn(2+) is required as a cofactor.

It carries out the reaction an S-(2-hydroxyacyl)glutathione + H2O = a 2-hydroxy carboxylate + glutathione + H(+). It participates in secondary metabolite metabolism; methylglyoxal degradation; (R)-lactate from methylglyoxal: step 2/2. Thiolesterase that catalyzes the hydrolysis of S-D-lactoyl-glutathione to form glutathione and D-lactic acid. The sequence is that of Hydroxyacylglutathione hydrolase from Escherichia coli O81 (strain ED1a).